The primary structure comprises 519 residues: Cilia- and flagella-associated protein 157 (519 aa).

A compositionally biased stretch (basic residues) spans 1–11; sequence MPPKKKGKRGP. A disordered region spans residues 1–25; that stretch reads MPPKKKGKRGPSAKTKEKETVRVAS. Coiled coils occupy residues 28 to 185 and 241 to 356; these read VTEQ…EKKV and IELI…QRTL.

It belongs to the CFAP157 family.

The protein resides in the cytoplasm. Its subcellular location is the cytoskeleton. The protein localises to the cilium basal body. Functionally, specifically required during spermatogenesis for flagellum morphogenesis and sperm motility. The polypeptide is Cilia- and flagella-associated protein 157 (Xenopus tropicalis (Western clawed frog)).